We begin with the raw amino-acid sequence, 316 residues long: Transaldolase (316 aa).

K132 serves as the catalytic Schiff-base intermediate with substrate.

Belongs to the transaldolase family. Type 1 subfamily. Homodimer.

Its subcellular location is the cytoplasm. The enzyme catalyses D-sedoheptulose 7-phosphate + D-glyceraldehyde 3-phosphate = D-erythrose 4-phosphate + beta-D-fructose 6-phosphate. It participates in carbohydrate degradation; pentose phosphate pathway; D-glyceraldehyde 3-phosphate and beta-D-fructose 6-phosphate from D-ribose 5-phosphate and D-xylulose 5-phosphate (non-oxidative stage): step 2/3. Transaldolase is important for the balance of metabolites in the pentose-phosphate pathway. The sequence is that of Transaldolase from Aliivibrio salmonicida (strain LFI1238) (Vibrio salmonicida (strain LFI1238)).